A 641-amino-acid chain; its full sequence is 1-deoxy-D-xylulose-5-phosphate synthase (641 aa).

Thiamine diphosphate contacts are provided by residues H71 and 112–114; that span reads SHA. Position 144 (D144) interacts with Mg(2+). Thiamine diphosphate contacts are provided by residues 145-146, N174, Y285, and E366; that span reads GA. N174 is a binding site for Mg(2+).

Belongs to the transketolase family. DXPS subfamily. Homodimer. Mg(2+) is required as a cofactor. Requires thiamine diphosphate as cofactor.

It carries out the reaction D-glyceraldehyde 3-phosphate + pyruvate + H(+) = 1-deoxy-D-xylulose 5-phosphate + CO2. Its pathway is metabolic intermediate biosynthesis; 1-deoxy-D-xylulose 5-phosphate biosynthesis; 1-deoxy-D-xylulose 5-phosphate from D-glyceraldehyde 3-phosphate and pyruvate: step 1/1. Catalyzes the acyloin condensation reaction between C atoms 2 and 3 of pyruvate and glyceraldehyde 3-phosphate to yield 1-deoxy-D-xylulose-5-phosphate (DXP). This chain is 1-deoxy-D-xylulose-5-phosphate synthase, found in Mycobacteroides abscessus (strain ATCC 19977 / DSM 44196 / CCUG 20993 / CIP 104536 / JCM 13569 / NCTC 13031 / TMC 1543 / L948) (Mycobacterium abscessus).